The following is a 382-amino-acid chain: Dual-specificity RNA methyltransferase RlmN (382 aa).

Residue Glu94 is the Proton acceptor of the active site. The 237-residue stretch at 100–336 folds into the Radical SAM core domain; it reads EANRGTLCVS…NTITRKTRGD (237 aa). The cysteines at positions 107 and 342 are disulfide-linked. Cys114, Cys118, and Cys121 together coordinate [4Fe-4S] cluster. S-adenosyl-L-methionine is bound by residues 168–169, Ser200, 222–224, and Asn299; these read GE and SLH. The active-site S-methylcysteine intermediate is Cys342.

This sequence belongs to the radical SAM superfamily. RlmN family. [4Fe-4S] cluster is required as a cofactor.

The protein localises to the cytoplasm. The enzyme catalyses adenosine(2503) in 23S rRNA + 2 reduced [2Fe-2S]-[ferredoxin] + 2 S-adenosyl-L-methionine = 2-methyladenosine(2503) in 23S rRNA + 5'-deoxyadenosine + L-methionine + 2 oxidized [2Fe-2S]-[ferredoxin] + S-adenosyl-L-homocysteine. The catalysed reaction is adenosine(37) in tRNA + 2 reduced [2Fe-2S]-[ferredoxin] + 2 S-adenosyl-L-methionine = 2-methyladenosine(37) in tRNA + 5'-deoxyadenosine + L-methionine + 2 oxidized [2Fe-2S]-[ferredoxin] + S-adenosyl-L-homocysteine. Its function is as follows. Specifically methylates position 2 of adenine 2503 in 23S rRNA and position 2 of adenine 37 in tRNAs. m2A2503 modification seems to play a crucial role in the proofreading step occurring at the peptidyl transferase center and thus would serve to optimize ribosomal fidelity. This chain is Dual-specificity RNA methyltransferase RlmN, found in Legionella pneumophila subsp. pneumophila (strain Philadelphia 1 / ATCC 33152 / DSM 7513).